A 401-amino-acid polypeptide reads, in one-letter code: Large ribosomal subunit protein uL4B (401 aa).

Positions 351–373 (IKAKEKKPDDGKPKAKKPLDAKT) are enriched in basic and acidic residues. Positions 351-401 (IKAKEKKPDDGKPKAKKPLDAKTKMIKLAKAKKRQARAEAKTAEAKTAESK) are disordered. The span at 374–385 (KMIKLAKAKKRQ) shows a compositional bias: basic residues. Residues 386-401 (ARAEAKTAEAKTAESK) show a composition bias toward basic and acidic residues.

Belongs to the universal ribosomal protein uL4 family. As to quaternary structure, component of the large ribosomal subunit.

The protein localises to the cytoplasm. Functionally, component of the large ribosomal subunit. The ribosome is a large ribonucleoprotein complex responsible for the synthesis of proteins in the cell. The protein is Large ribosomal subunit protein uL4B (rpl4-b) of Xenopus laevis (African clawed frog).